Reading from the N-terminus, the 1040-residue chain is MQVLPPGRTGGPSRLFIMRPVATTLLMVAILLAGIIGYRFLPVSALPEVDYPTIQVVTLYPGASPDVVTSAITAPLERQFGQMSGLKQMSSQSSGGASVVTLQFQLTLPLDVAEQEVQAAINAATNLLPSDLPNPPVYSKVNPADPPIMTLAVTSSAIPMTQVEDMVETRVAQKISQVSGVGLVTLAGGQRPAVRVKLNAQAIAALGLTSETVRTAITSANVNSAKGSLDGPARAVTLSANDQMQSAEDYRRLIIAYQNGAPIRLGDVASVEQGAENSWLGAWANQQRAIVMNVQRQPGANIIDTADSIRQMLPQLTESLPKSVKVQVLSDRTTNIRASVRDTQFELMLAIALVVMIIYLFLRNVPATIIPGVAVPLSLVGTFAVMVFLDFSINNLTLMALTIATGFVVDDAIVVIENISRYIEKGEKPLAAALKGAGEIGFTIISLTFSLIAVLIPLLFMGDIVGRLFREFAVTLAVAILISAVVSLTLTPMMCARMLSHESLRKQNRFSRASERFFERVIAVYGRWLSRVLNHPWLTLGVALSTLALSIILWVFIPKGFFPIQDNGIIQGTLQAPQSVSFASMAERQRQVASIILKDPAVESLTSFVGVDGTNPALNSARLQINLKPLDERDDRVQTVISRLQQAVDGVPGVALYLQPTQDLTIDTTVSRTQYQFTLQANSLEALSTWVPPLLSRLQAQPQLADVSSDWQDKGLAAYIKVDRDSASRLGISMADVDNALYNAFGQRLISTIYTQANQYRVVLEQDTEATPGLAALENIRLTSSDGGIVPLTAIATVEQRFTPLSVNHLDQFPVTTISFNVPDNYSLGEAVEAILAAEQSLDFPTDIRTQFQGSSLAFQSALGSTVWLVVAAVVAMYIVLGVLYESFIHPITILSTLPTAGVGALLALWLAGSELDVIAIIGIILLIGIVKKNAIMMIDFALAAEREQGMPPREAIYQACLLRFRPILMTTLAALLGALPLMLSTGVGAELRRPLGIGMVGGLMLSQVLTLFTTPVIYLLFDRLSLHLKRRFPRQEEEA.

The next 12 helical transmembrane spans lie at 16-36 (FIMR…AGII), 342-362 (DTQF…YLFL), 369-389 (IIPG…MVFL), 396-416 (LTLM…IVVI), 440-460 (IGFT…PLLF), 472-492 (FAVT…TLTP), 537-557 (WLTL…WVFI), 863-883 (LGST…VLGV), 888-908 (FIHP…ALLA), 911-931 (LAGS…IGIV), 968-988 (ILMT…STGV), and 998-1018 (IGMV…TPVI).

The protein belongs to the resistance-nodulation-cell division (RND) (TC 2.A.6) family. MdtB subfamily. As to quaternary structure, part of a tripartite efflux system composed of MdtA, MdtB and MdtC. MdtB forms a heteromultimer with MdtC.

The protein localises to the cell inner membrane. The sequence is that of Multidrug resistance protein MdtB from Klebsiella pneumoniae subsp. pneumoniae (strain ATCC 700721 / MGH 78578).